The chain runs to 239 residues: LexA repressor (239 aa).

The segment at residues 26-46 is a DNA-binding region (H-T-H motif); the sequence is FDEMKDALDLASKSGIHRLIT. Active-site for autocatalytic cleavage activity residues include Ser-159 and Lys-197.

The protein belongs to the peptidase S24 family. Homodimer.

It catalyses the reaction Hydrolysis of Ala-|-Gly bond in repressor LexA.. Functionally, represses a number of genes involved in the response to DNA damage (SOS response), including recA and lexA. In the presence of single-stranded DNA, RecA interacts with LexA causing an autocatalytic cleavage which disrupts the DNA-binding part of LexA, leading to derepression of the SOS regulon and eventually DNA repair. This is LexA repressor from Rhizobium etli (strain ATCC 51251 / DSM 11541 / JCM 21823 / NBRC 15573 / CFN 42).